The primary structure comprises 116 residues: MRYVAAYLLAVLGGNANPSAGDIKKILGSVGIDAEDERLNKVIGELKGKDIEEVMAAGRGKLSSMPSGGGVAAAAGGGGAAAGGGGAAPAAEEKKEEKKEESEEESDDDMGFGLFD.

A disordered region spans residues 60 to 116 (GKLSSMPSGGGVAAAAGGGGAAAGGGGAAPAAEEKKEEKKEESEEESDDDMGFGLFD). The span at 67–87 (SGGGVAAAAGGGGAAAGGGGA) shows a compositional bias: gly residues. A compositionally biased stretch (basic and acidic residues) spans 91–101 (AEEKKEEKKEE).

The protein belongs to the eukaryotic ribosomal protein P1/P2 family. In terms of assembly, P1 and P2 exist as dimers at the large ribosomal subunit. In terms of processing, phosphorylated.

In terms of biological role, plays an important role in the elongation step of protein synthesis. The polypeptide is Large ribosomal subunit protein P2 (Branchiostoma floridae (Florida lancelet)).